The sequence spans 152 residues: Allergen Asp f 15 (152 aa).

The N-terminal stretch at 1–19 is a signal peptide; that stretch reads MKFTTPISLISLFVSSALA. Cystine bridges form between C53–C90 and C93–C148.

This sequence belongs to the cerato-platanin family.

It localises to the secreted. This is Allergen Asp f 15 from Aspergillus fumigatus (strain ATCC MYA-4609 / CBS 101355 / FGSC A1100 / Af293) (Neosartorya fumigata).